The primary structure comprises 857 residues: Linoleate 9S-lipoxygenase 6 (857 aa).

One can recognise a PLAT domain in the interval 26–156; sequence NALDFTDLAG…RYKSDRIFFA (131 aa). The Lipoxygenase domain occupies 159 to 857; the sequence is PYLPSETPEL…GKGIPNSVSI (699 aa). Residues 205–243 are disordered; that stretch reads NPDQGEQNVRTTLGGSADYPYPRRGRTGRPPTRTDPKSE. Polar residues predominate over residues 208–218; the sequence is QGEQNVRTTLG. Positions 518, 523, 709, 713, and 857 each coordinate Fe cation.

This sequence belongs to the lipoxygenase family. Monomer. It depends on Fe cation as a cofactor. In terms of tissue distribution, expressed in tubers and roots. Detected in leaves, petioles and stems.

The protein localises to the cytoplasm. The catalysed reaction is (9Z,12Z)-octadecadienoate + O2 = (9S)-hydroperoxy-(10E,12Z)-octadecadienoate. The protein operates within lipid metabolism; oxylipin biosynthesis. Functionally, plant lipoxygenases may be involved in a number of diverse aspects of plant physiology including growth and development, pest resistance, and senescence or responses to wounding. Catalyzes the hydroperoxidation of lipids containing a cis,cis-1,4-pentadiene structure. Linoleic and linolenic acids are the preferred substrates, but is also active with arachidonic acid. The products are almost exclusively the S enantiomers. This Solanum tuberosum (Potato) protein is Linoleate 9S-lipoxygenase 6 (LOX1.6).